Consider the following 215-residue polypeptide: Beta-crystallin A3 (215 aa).

The tract at residues 1–30 is N-terminal arm; sequence MGEAAVPPELDTFPAAKMAQTNPLPVPMGP. Beta/gamma crystallin 'Greek key' domains lie at 31 to 70 and 71 to 117; these read WKIT…KVEC and GAWV…RPVC. The segment at 118-123 is connecting peptide; sequence SANHKE. Beta/gamma crystallin 'Greek key' domains follow at residues 124–165 and 166–214; these read SKIT…KIPC and GAWV…RRIQ.

This sequence belongs to the beta/gamma-crystallin family. In terms of assembly, homo/heterodimer, or complexes of higher-order. The structure of beta-crystallin oligomers seems to be stabilized through interactions between the N-terminal arms.

Crystallins are the dominant structural components of the vertebrate eye lens. This chain is Beta-crystallin A3 (CRYBA1), found in Gallus gallus (Chicken).